The sequence spans 796 residues: Polyribonucleotide nucleotidyltransferase (796 aa).

Mg(2+)-binding residues include D490 and D496. Positions 557–616 (PRIESIFINKDKIRNVIGSGGKNIRDICEKTGAKIEIIQDGTVMIYAVNNEAVEYAKSMI) constitute a KH domain. The region spanning 626–693 (GKVFEGTVVE…DREHIQLSMR (68 aa)) is the S1 motif domain. Low complexity-rich tracts occupy residues 717–728 (DDSCGSTGGSSF), 747–759 (GGSS…NSNG), and 769–784 (SSNG…SNSR). Residues 717–796 (DDSCGSTGGS…HDVPRKPRFF (80 aa)) form a disordered region. The segment covering 785–796 (NGHDVPRKPRFF) has biased composition (basic and acidic residues).

It belongs to the polyribonucleotide nucleotidyltransferase family. Mg(2+) is required as a cofactor.

The protein resides in the cytoplasm. It catalyses the reaction RNA(n+1) + phosphate = RNA(n) + a ribonucleoside 5'-diphosphate. Involved in mRNA degradation. Catalyzes the phosphorolysis of single-stranded polyribonucleotides processively in the 3'- to 5'-direction. The protein is Polyribonucleotide nucleotidyltransferase of Ehrlichia chaffeensis (strain ATCC CRL-10679 / Arkansas).